The following is a 312-amino-acid chain: Small ribosomal subunit protein RACK1 (312 aa).

WD repeat units follow at residues 9-42, 63-93, 105-135, 148-180, 192-222, 233-262, and 279-307; these read GHRG…ISWK, GHTG…RMWD, KHTK…RVWN, GHED…KVWN, GHSN…LLWD, NVES…SVYD, and PSEC…RVWS.

The protein belongs to the WD repeat G protein beta family. Ribosomal protein RACK1 subfamily.

The chain is Small ribosomal subunit protein RACK1 from Leishmania chagasi.